A 682-amino-acid polypeptide reads, in one-letter code: Beta-galactosidase (682 aa).

The first 23 residues, 1–23, serve as a signal peptide directing secretion; that stretch reads MPGFLVRILPLLLPLLLLGPTRG. A propeptide spanning residues 24–28 is cleaved from the precursor; it reads LRNAT. N-linked (GlcNAc...) asparagine glycosylation is present at N26. Substrate contacts are provided by Y83, E129, and N187. E188 (proton donor) is an active-site residue. An intrachain disulfide couples C195 to C230. The N-linked (GlcNAc...) asparagine glycan is linked to N247. Catalysis depends on E268, which acts as the Nucleophile. Residue Y333 coordinates substrate. 4 N-linked (GlcNAc...) asparagine glycosylation sites follow: N464, N498, N545, and N555. Cysteines 626 and 634 form a disulfide.

Belongs to the glycosyl hydrolase 35 family. Homodimer. May form higher multimers.

The protein localises to the lysosome. It carries out the reaction Hydrolysis of terminal non-reducing beta-D-galactose residues in beta-D-galactosides.. Functionally, cleaves beta-linked terminal galactosyl residues from gangliosides, glycoproteins, and glycosaminoglycans. The protein is Beta-galactosidase (GLB1) of Macaca fascicularis (Crab-eating macaque).